Here is a 779-residue protein sequence, read N- to C-terminus: Glucan endo-1,3-beta-D-glucosidase 2 (779 aa).

Positions 1-71 (MCYSRQAIPP…SNPLADSQVN (71 aa)) are disordered. The segment covering 57–71 (RTPSSSNPLADSQVN) has biased composition (polar residues). The beta-sandwich subdomain stretch occupies residues 73–309 (DNIFQSPVLS…NGLICQLSAD (237 aa)). Residues 73–779 (DNIFQSPVLS…WSLAYSGAFS (707 aa)) form the GH81 domain. The alpha/beta subdomain stretch occupies residues 309–400 (DSVPSIDMAA…LTNSFDMQVQ (92 aa)). Positions 375–779 (IASSLDSTVK…WSLAYSGAFS (405 aa)) are sufficient for catalytic activity. A (alpha/beta)6 barrel subdomain region spans residues 415–779 (NKKADYSQEK…WSLAYSGAFS (365 aa)). Asp526 is an active-site residue. 4 residues coordinate (1,3-beta-D-glucosyl)n: His530, Asp607, Glu609, and Glu613. Catalysis depends on residues Glu609 and Glu613. Residues 678–680 (KID) form a may provide specificity for triple-helical beta-glucan region. Residue Tyr691 participates in (1,3-beta-D-glucosyl)n binding.

The protein belongs to the glycosyl hydrolase 81 family.

The protein resides in the cytoplasm. The enzyme catalyses Hydrolysis of (1-&gt;3)-beta-D-glucosidic linkages in (1-&gt;3)-beta-D-glucans.. Its activity is regulated as follows. Inhibited by mercury ions. Its function is as follows. Cleaves internal linkages in 1,3-beta-glucan. This chain is Glucan endo-1,3-beta-D-glucosidase 2, found in Saccharomyces cerevisiae (strain ATCC 204508 / S288c) (Baker's yeast).